The sequence spans 130 residues: Small ribosomal subunit protein uS8 (130 aa).

Belongs to the universal ribosomal protein uS8 family. In terms of assembly, part of the 30S ribosomal subunit. Contacts proteins S5 and S12.

Functionally, one of the primary rRNA binding proteins, it binds directly to 16S rRNA central domain where it helps coordinate assembly of the platform of the 30S subunit. The sequence is that of Small ribosomal subunit protein uS8 from Yersinia pseudotuberculosis serotype O:1b (strain IP 31758).